The following is a 266-amino-acid chain: Cysteine-rich repeat secretory protein 41 (266 aa).

The N-terminal stretch at 1 to 26 is a signal peptide; it reads MSSVFGSVHILAMIAIQLLLTHSVSS. Gnk2-homologous domains are found at residues 33–136 and 142–253; these read YLHH…SVAS and YEND…LYPF.

Belongs to the cysteine-rich repeat secretory protein family.

It localises to the secreted. This is Cysteine-rich repeat secretory protein 41 (CRRSP41) from Arabidopsis thaliana (Mouse-ear cress).